The sequence spans 122 residues: MVQLESKIRVADNSGAKVLRVIKVLGGFHKSKGTVGDTVVCSVREAIPHTDLKKGQVVQAVIVRTKKEIRRKDGTYIRFDDNAAVLIDKNKLPLGTRVFGPVAREVREKGYAKIASLAKEVW.

The protein belongs to the universal ribosomal protein uL14 family. Part of the 50S ribosomal subunit. Forms a cluster with proteins L3 and L19. In the 70S ribosome, L14 and L19 interact and together make contacts with the 16S rRNA in bridges B5 and B8.

Functionally, binds to 23S rRNA. Forms part of two intersubunit bridges in the 70S ribosome. The sequence is that of Large ribosomal subunit protein uL14 from Petrotoga mobilis (strain DSM 10674 / SJ95).